The following is a 121-amino-acid chain: uncharacterized protein (121 aa).

Positions 1–19 (MKKFALATIFALATTSAFA) are cleaved as a signal peptide.

It to E.coli YgiW.

Its subcellular location is the periplasm. This is an uncharacterized protein from Haemophilus influenzae (strain ATCC 51907 / DSM 11121 / KW20 / Rd).